Here is a 37-residue protein sequence, read N- to C-terminus: Esculentin-2SE (37 aa).

Cys-31 and Cys-37 are disulfide-bonded.

Expressed by the skin glands.

The protein localises to the secreted. Mast cell degranulating peptide. Causes histamine release from rat peritoneal mast cells in vitro. Has antibacterial activity against the Gram-negative bacterium E.coli K12 and Gram-positive bacterium M.luteus NCT C2665. This is Esculentin-2SE from Lithobates sevosus (Dusky gopher frog).